The primary structure comprises 159 residues: Probable minor fimbrial protein (159 aa).

A propeptide spans 1–6 (MKKMHG) (leader sequence). Residue F7 is modified to N-methylphenylalanine. The helical transmembrane segment at 7-29 (FTLIELMIVVAIIGVLASIALMQ) threads the bilayer. 2 disulfide bridges follow: C56–C71 and C140–C153.

Belongs to the N-Me-Phe pilin family. As to quaternary structure, the pili are polar flexible filaments of about 5.4 nanometers diameter and 2.5 micrometers average length; they consist of only a single polypeptide chain arranged in a helical configuration of five subunits per turn in the assembled pilus.

Its subcellular location is the fimbrium. It localises to the membrane. The protein is Probable minor fimbrial protein (fimZ) of Dichelobacter nodosus (Bacteroides nodosus).